The following is an 89-amino-acid chain: Small ribosomal subunit protein uS15 (89 aa).

The protein belongs to the universal ribosomal protein uS15 family. In terms of assembly, part of the 30S ribosomal subunit. Forms a bridge to the 50S subunit in the 70S ribosome, contacting the 23S rRNA.

One of the primary rRNA binding proteins, it binds directly to 16S rRNA where it helps nucleate assembly of the platform of the 30S subunit by binding and bridging several RNA helices of the 16S rRNA. Functionally, forms an intersubunit bridge (bridge B4) with the 23S rRNA of the 50S subunit in the ribosome. The protein is Small ribosomal subunit protein uS15 of Clavibacter michiganensis subsp. michiganensis (strain NCPPB 382).